Here is an 828-residue protein sequence, read N- to C-terminus: DNA gyrase subunit A (828 aa).

One can recognise a Topo IIA-type catalytic domain in the interval 38 to 501 (LPDARDGLKP…SYESIDTEDL (464 aa)). The O-(5'-phospho-DNA)-tyrosine intermediate role is filled by Y126. A GyrA-box motif is present at residues 528-534 (QNRGGKG).

It belongs to the type II topoisomerase GyrA/ParC subunit family. Heterotetramer, composed of two GyrA and two GyrB chains. In the heterotetramer, GyrA contains the active site tyrosine that forms a transient covalent intermediate with DNA, while GyrB binds cofactors and catalyzes ATP hydrolysis.

Its subcellular location is the cytoplasm. The enzyme catalyses ATP-dependent breakage, passage and rejoining of double-stranded DNA.. Its function is as follows. A type II topoisomerase that negatively supercoils closed circular double-stranded (ds) DNA in an ATP-dependent manner to modulate DNA topology and maintain chromosomes in an underwound state. Negative supercoiling favors strand separation, and DNA replication, transcription, recombination and repair, all of which involve strand separation. Also able to catalyze the interconversion of other topological isomers of dsDNA rings, including catenanes and knotted rings. Type II topoisomerases break and join 2 DNA strands simultaneously in an ATP-dependent manner. This Helicobacter pylori (strain J99 / ATCC 700824) (Campylobacter pylori J99) protein is DNA gyrase subunit A.